Reading from the N-terminus, the 84-residue chain is Cell division topological specificity factor (84 aa).

The protein belongs to the MinE family.

Its function is as follows. Prevents the cell division inhibition by proteins MinC and MinD at internal division sites while permitting inhibition at polar sites. This ensures cell division at the proper site by restricting the formation of a division septum at the midpoint of the long axis of the cell. The sequence is that of Cell division topological specificity factor from Pseudomonas fluorescens (strain ATCC BAA-477 / NRRL B-23932 / Pf-5).